We begin with the raw amino-acid sequence, 713 residues long: Endopolyphosphatase (713 aa).

The Cytoplasmic portion of the chain corresponds to methionine 1–arginine 19. The chain crosses the membrane as a helical; Signal-anchor for type II membrane protein span at residues isoleucine 20 to histidine 40. At glutamine 41–glycine 713 the chain is on the vacuolar side. Residues serine 399–leucine 418 show a composition bias toward acidic residues. The interval serine 399–leucine 430 is disordered. Residues asparagine 507 and asparagine 645 are each glycosylated (N-linked (GlcNAc...) asparagine). A compositionally biased stretch (basic residues) spans valine 640 to aspartate 659. The tract at residues valine 640 to valine 684 is disordered. Residues lysine 660–arginine 683 are compositionally biased toward basic and acidic residues.

Belongs to the endopolyphosphatase PPN1 family. The cofactor is a divalent metal cation. Post-translationally, processing by proteases in the vacuole may be required for activation.

Its subcellular location is the vacuole membrane. It catalyses the reaction [phosphate](n+1) + n H2O = (n+1) phosphate + n H(+). Catalyzes the hydrolysis of inorganic polyphosphate (polyP) chains of many hundreds of phosphate residues into shorter lengths. In Debaryomyces hansenii (strain ATCC 36239 / CBS 767 / BCRC 21394 / JCM 1990 / NBRC 0083 / IGC 2968) (Yeast), this protein is Endopolyphosphatase (PPN1).